A 649-amino-acid polypeptide reads, in one-letter code: Threonine--tRNA ligase (649 aa).

The TGS domain occupies 1 to 63 (MSSIKITFPD…KEDGSIEIIT (63 aa)). The tract at residues 245–543 (DHRVIGNELD…LTEMYKGAFP (299 aa)) is catalytic. Residues Cys-339, His-390, and His-520 each contribute to the Zn(2+) site.

This sequence belongs to the class-II aminoacyl-tRNA synthetase family. As to quaternary structure, homodimer. Zn(2+) serves as cofactor.

The protein localises to the cytoplasm. The enzyme catalyses tRNA(Thr) + L-threonine + ATP = L-threonyl-tRNA(Thr) + AMP + diphosphate + H(+). Its function is as follows. Catalyzes the attachment of threonine to tRNA(Thr) in a two-step reaction: L-threonine is first activated by ATP to form Thr-AMP and then transferred to the acceptor end of tRNA(Thr). Also edits incorrectly charged L-seryl-tRNA(Thr). This chain is Threonine--tRNA ligase, found in Ligilactobacillus salivarius (strain UCC118) (Lactobacillus salivarius).